Reading from the N-terminus, the 160-residue chain is MRVSVFAVGRMKAGPERELVERYFDRFSKAGPPLGLEFAGVSEIPESRGQTAELRKAEEAQRIHEALDNGAALILLDERGKALGSEAFADRIGRMRDDGKRQLIVAIGGPDGHDPALRTRADLVLALGELTWPHQIARILIAEQLYRAATILAGHPYHRS.

Residues leucine 76, glycine 108, and 127 to 132 each bind S-adenosyl-L-methionine; that span reads LGELTW.

It belongs to the RNA methyltransferase RlmH family. Homodimer.

The protein localises to the cytoplasm. It carries out the reaction pseudouridine(1915) in 23S rRNA + S-adenosyl-L-methionine = N(3)-methylpseudouridine(1915) in 23S rRNA + S-adenosyl-L-homocysteine + H(+). In terms of biological role, specifically methylates the pseudouridine at position 1915 (m3Psi1915) in 23S rRNA. The chain is Ribosomal RNA large subunit methyltransferase H from Brucella anthropi (strain ATCC 49188 / DSM 6882 / CCUG 24695 / JCM 21032 / LMG 3331 / NBRC 15819 / NCTC 12168 / Alc 37) (Ochrobactrum anthropi).